A 401-amino-acid chain; its full sequence is Nodal homolog 3-B (401 aa).

The N-terminal stretch at 1–18 (MAFLSLFLCLVFSSPLMA) is a signal peptide. The propeptide occupies 19-274 (MPPALQGRKA…KVNGFRRLRR (256 aa)). Residues N168, N337, and N344 are each glycosylated (N-linked (GlcNAc...) asparagine). Disulfide bonds link C299/C365 and C328/C396.

It belongs to the TGF-beta family. In terms of assembly, monomer. The propeptide region interacts with bmp4 in a non-covalent manner. Expressed in the dorsal marginal region of late blastula, becoming restricted to the Spemann organizer at the early gastrula stage.

It localises to the secreted. Functionally, exhibits mesoderm-dorsalizing activity and neural-inducing activity, but lacks mesoderm-inducing activity. Regulates the expression of specific mesodermal and neural genes. Induces convergent extension movements at the embryonic midline by activating the fgf signaling pathway to induce t/bra expression in the organizer region. Acts with wnt11 to induce Spemann organizer cells and induce axis formation. The unprocessed protein antagonizes bmp-signaling. The sequence is that of Nodal homolog 3-B from Xenopus tropicalis (Western clawed frog).